Consider the following 485-residue polypeptide: MTIRYESVENLINLIKNKEITPSKVVSDIYDAIEETDPTIKSFLALDKENAIKKAQELDELQAKDQMEGKLFGIPMGIKDNIITEGVETTCASKMLEGFVPIYESTVMNKLRNEQAVLIGKLNMDEFAMGGSTETSYYKKTVNPFDHTAVPGGSSGGSAAAVAAGLVPFSLGSDTGGSIRQPAAYCGIVGLKPTYGRVSRFGLVAFASSLDQIGPLTRTVKDNALVLEAITGVDENDSTSAPVEDADYTSDIGKDIKGLKIALPSEYLGEGVSDEVKASVKEAVETLRGLGATVEEVSLPNTKYGIPSYYVIASSEASSNLSRFDGIRYGYHSPEANSLEELYKMSRSEGFGEEVKRRIFLGTFALSSGYYDAFYKKSQKVRTLIKDDFNRIFENYDVVVGPTTPTTAFNLGDEIDDPLTMYANDLLTTPVNLAGLPGISVPCGQSNGRPIGLQFIGKPFDEKTLYRVAYQYETKFNFHNEYEKL.

Residues Lys-79 and Ser-154 each act as charge relay system in the active site. The active-site Acyl-ester intermediate is the Ser-178.

It belongs to the amidase family. GatA subfamily. In terms of assembly, heterotrimer of A, B and C subunits.

The enzyme catalyses L-glutamyl-tRNA(Gln) + L-glutamine + ATP + H2O = L-glutaminyl-tRNA(Gln) + L-glutamate + ADP + phosphate + H(+). Allows the formation of correctly charged Gln-tRNA(Gln) through the transamidation of misacylated Glu-tRNA(Gln) in organisms which lack glutaminyl-tRNA synthetase. The reaction takes place in the presence of glutamine and ATP through an activated gamma-phospho-Glu-tRNA(Gln). The sequence is that of Glutamyl-tRNA(Gln) amidotransferase subunit A from Staphylococcus saprophyticus subsp. saprophyticus (strain ATCC 15305 / DSM 20229 / NCIMB 8711 / NCTC 7292 / S-41).